We begin with the raw amino-acid sequence, 579 residues long: Probable cytochrome c oxidase subunit 1-alpha (579 aa).

Positions 1–21 (MSILNEPQGAAAAEDSYENEL) are disordered. Residues 44 to 64 (IGTLYLVTSFAFFCIGGVMAL) form a helical membrane-spanning segment. H90 serves as a coordination point for Fe(II)-heme a. The next 6 helical transmembrane spans lie at 93–113 (IMLL…IMPL), 125–145 (LNMF…GGFL), 174–194 (MWIM…VNFI), 217–237 (VLLT…ALFA), 262–282 (LFWF…FGII), and 295–315 (FGYM…VTVW). Cu cation contacts are provided by H268 and Y272. Positions 268 to 272 (HPEVY) form a cross-link, 1'-histidyl-3'-tyrosine (His-Tyr). Positions 317 and 318 each coordinate Cu cation. Transmembrane regions (helical) follow at residues 319-339 (MYVT…LIAV), 363-383 (MLWA…GVIL), 397-417 (FVVA…MFSG), 437-457 (ITFW…HWLG), and 480-500 (ISTI…YNVW). H401 contacts heme a3. H403 lines the Fe(II)-heme a pocket.

It belongs to the heme-copper respiratory oxidase family. Associates with subunits II, III and IV to form cytochrome c oxidase. The cofactor is Cu(2+). Requires heme as cofactor.

The protein resides in the cell membrane. It catalyses the reaction 4 Fe(II)-[cytochrome c] + O2 + 8 H(+)(in) = 4 Fe(III)-[cytochrome c] + 2 H2O + 4 H(+)(out). It participates in energy metabolism; oxidative phosphorylation. Its function is as follows. Cytochrome c oxidase is the component of the respiratory chain that catalyzes the reduction of oxygen to water. Subunits 1-3 form the functional core of the enzyme complex. CO I is the catalytic subunit of the enzyme. Electrons originating in cytochrome c are transferred via the copper A center of subunit 2 and heme A of subunit 1 to the bimetallic center formed by heme A3 and copper B. This Streptomyces avermitilis (strain ATCC 31267 / DSM 46492 / JCM 5070 / NBRC 14893 / NCIMB 12804 / NRRL 8165 / MA-4680) protein is Probable cytochrome c oxidase subunit 1-alpha (ctaD1).